The following is a 240-amino-acid chain: UDP-2,3-diacylglucosamine hydrolase (240 aa).

Positions 8, 10, 41, 79, and 114 each coordinate Mn(2+). Residue 79–80 (NR) coordinates substrate. Substrate contacts are provided by Asp122, Ser160, Asn164, Lys167, and His195. Mn(2+) contacts are provided by His195 and His197.

This sequence belongs to the LpxH family. Mn(2+) serves as cofactor.

It localises to the cell inner membrane. It catalyses the reaction UDP-2-N,3-O-bis[(3R)-3-hydroxytetradecanoyl]-alpha-D-glucosamine + H2O = 2-N,3-O-bis[(3R)-3-hydroxytetradecanoyl]-alpha-D-glucosaminyl 1-phosphate + UMP + 2 H(+). It functions in the pathway glycolipid biosynthesis; lipid IV(A) biosynthesis; lipid IV(A) from (3R)-3-hydroxytetradecanoyl-[acyl-carrier-protein] and UDP-N-acetyl-alpha-D-glucosamine: step 4/6. Its function is as follows. Hydrolyzes the pyrophosphate bond of UDP-2,3-diacylglucosamine to yield 2,3-diacylglucosamine 1-phosphate (lipid X) and UMP by catalyzing the attack of water at the alpha-P atom. Involved in the biosynthesis of lipid A, a phosphorylated glycolipid that anchors the lipopolysaccharide to the outer membrane of the cell. This Salmonella newport (strain SL254) protein is UDP-2,3-diacylglucosamine hydrolase.